Reading from the N-terminus, the 102-residue chain is Putative peripheral benzodiazepine receptor-related protein (102 aa).

As to expression, ubiquitous.

In Homo sapiens (Human), this protein is Putative peripheral benzodiazepine receptor-related protein (TSPO).